Here is a 65-residue protein sequence, read N- to C-terminus: Large ribosomal subunit protein bL35 (65 aa).

This sequence belongs to the bacterial ribosomal protein bL35 family.

This Baumannia cicadellinicola subsp. Homalodisca coagulata protein is Large ribosomal subunit protein bL35.